A 930-amino-acid chain; its full sequence is Alanine--tRNA ligase (930 aa).

Zn(2+) is bound by residues His595, His599, Cys700, and His704.

Belongs to the class-II aminoacyl-tRNA synthetase family. The cofactor is Zn(2+).

It is found in the cytoplasm. It carries out the reaction tRNA(Ala) + L-alanine + ATP = L-alanyl-tRNA(Ala) + AMP + diphosphate. In terms of biological role, catalyzes the attachment of alanine to tRNA(Ala) in a two-step reaction: alanine is first activated by ATP to form Ala-AMP and then transferred to the acceptor end of tRNA(Ala). Also edits incorrectly charged Ser-tRNA(Ala) and Gly-tRNA(Ala) via its editing domain. The polypeptide is Alanine--tRNA ligase (Malacoplasma penetrans (strain HF-2) (Mycoplasma penetrans)).